The following is a 290-amino-acid chain: 4-diphosphocytidyl-2-C-methyl-D-erythritol kinase (290 aa).

Lysine 13 is an active-site residue. 96–106 (PMGGGIGGGSS) serves as a coordination point for ATP. The active site involves aspartate 138.

This sequence belongs to the GHMP kinase family. IspE subfamily.

It catalyses the reaction 4-CDP-2-C-methyl-D-erythritol + ATP = 4-CDP-2-C-methyl-D-erythritol 2-phosphate + ADP + H(+). It participates in isoprenoid biosynthesis; isopentenyl diphosphate biosynthesis via DXP pathway; isopentenyl diphosphate from 1-deoxy-D-xylulose 5-phosphate: step 3/6. Catalyzes the phosphorylation of the position 2 hydroxy group of 4-diphosphocytidyl-2C-methyl-D-erythritol. The protein is 4-diphosphocytidyl-2-C-methyl-D-erythritol kinase of Vibrio cholerae serotype O1 (strain ATCC 39541 / Classical Ogawa 395 / O395).